Here is a 108-residue protein sequence, read N- to C-terminus: Small proline-rich protein 2H (108 aa).

Residues 1–11 (MSYQQQQCKQP) show a composition bias toward low complexity. Positions 1–22 (MSYQQQQCKQPCQPPPVCPPPQ) are disordered. The segment covering 12-22 (CQPPPVCPPPQ) has biased composition (pro residues). 7 consecutive repeat copies span residues 21 to 29 (PQCPEPCPP), 30 to 38 (PKCPEPCPP), 39 to 47 (PKCTEPCPP), 48 to 56 (PKCPEPCPP), 57 to 65 (PKCPEPCPP), 66 to 74 (PKCPEPCPP), and 75 to 83 (PKCTEPCPP). A 7 X 9 AA tandem repeats of P-[KQ]-C-[PT]-E-P-C-P-P region spans residues 21 to 83 (PQCPEPCPPP…PPKCTEPCPP (63 aa)). The segment at 83–108 (PPSYQQKCPSVQPSPPCQQKCPPKNK) is disordered. Positions 87–108 (QQKCPSVQPSPPCQQKCPPKNK) are enriched in low complexity.

It belongs to the cornifin (SPRR) family. In terms of tissue distribution, expressed weakly in uterus.

It is found in the cytoplasm. Cross-linked envelope protein of keratinocytes. It is a keratinocyte protein that first appears in the cell cytosol, but ultimately becomes cross-linked to membrane proteins by transglutaminase. All that results in the formation of an insoluble envelope beneath the plasma membrane. The sequence is that of Small proline-rich protein 2H (Sprr2h) from Mus musculus (Mouse).